The primary structure comprises 329 residues: Probable CTD kinase subunit alpha homolog (329 aa).

Residues Y22–F297 form the Protein kinase domain. ATP contacts are provided by residues I28–V36 and K49. D139 acts as the Proton acceptor in catalysis.

The protein belongs to the protein kinase superfamily. CMGC Ser/Thr protein kinase family. CDC2/CDKX subfamily. As to quaternary structure, component of the CTDK-I complex.

The protein resides in the nucleus. Its subcellular location is the nucleolus. The catalysed reaction is [DNA-directed RNA polymerase] + ATP = phospho-[DNA-directed RNA polymerase] + ADP + H(+). Its function is as follows. Catalytic subunit of the CTDK-I complex, which hyperphosphorylates the C-terminal heptapeptide repeat domain (CTD) of the largest RNA polymerase II subunit. Involved in RNA polymerase II transcriptional elongation and pre-mRNA 3'-end processing. This Encephalitozoon cuniculi (strain GB-M1) (Microsporidian parasite) protein is Probable CTD kinase subunit alpha homolog (CTK1).